The chain runs to 348 residues: Dihydroorotase (348 aa).

Zn(2+) contacts are provided by His17 and His19. Substrate contacts are provided by residues 19-21 (HLR) and Asn45. Zn(2+)-binding residues include Lys103, His140, and His178. Lys103 is subject to N6-carboxylysine. His140 provides a ligand contact to substrate. Leu223 contacts substrate. Residue Asp251 coordinates Zn(2+). Residue Asp251 is part of the active site. Residues His255 and Ala267 each coordinate substrate.

This sequence belongs to the metallo-dependent hydrolases superfamily. DHOase family. Class II DHOase subfamily. In terms of assembly, homodimer. Zn(2+) serves as cofactor.

The enzyme catalyses (S)-dihydroorotate + H2O = N-carbamoyl-L-aspartate + H(+). The protein operates within pyrimidine metabolism; UMP biosynthesis via de novo pathway; (S)-dihydroorotate from bicarbonate: step 3/3. Catalyzes the reversible cyclization of carbamoyl aspartate to dihydroorotate. This chain is Dihydroorotase, found in Salmonella heidelberg (strain SL476).